Reading from the N-terminus, the 145-residue chain is Basic leucine zipper 1 (145 aa).

Residues 1-11 are compositionally biased toward polar residues; the sequence is MANAEKTSSGS. The interval 1–39 is disordered; that stretch reads MANAEKTSSGSDIDEKKRKRKLSNRESARRSRLKKQKLM. The bZIP domain maps to 14–77; the sequence is DEKKRKRKLS…DSVETENAGL (64 aa). Residues 16–37 are basic motif; sequence KKRKRKLSNRESARRSRLKKQK. Positions 46–53 are leucine-zipper; that stretch reads ISSLERRI.

This sequence belongs to the bZIP family. In terms of assembly, interacts with ZFP7, BZIP4, BZIP9, BZIP10, BZIP11, BZIP25, BZIP42, BZIP44, BZIP53, BZIP58 and BZIP63. In terms of tissue distribution, expressed in both shoots, including young leaves, stipulae and trichomes (except in cotyledons and hypocotyl), and roots, including vascular tissues (e.g. in both the phloem and the xylem). Present in seeds and pollen. Restricted to vasculatures and roots in the presence of sucrose or glucose.

The protein localises to the nucleus. In terms of biological role, transcription factor that binds to the C-box-like motif (5'-TGCTGACGTCA-3') and G-box-like motif (5'-CCACGTGGCC-3'), ABRE elements, of gene promoters involved in sugar signaling. Activated by low energy stress both at transcriptional and post-transcriptional mechanisms. Promotes dark-induced senescence and participates in the transcriptional reprogramming of amino acid metabolism during the dark-induced starvation response. Transcription activator of the mannan synthase CSLA9. Recognizes and binds to DNA-specific sequence of CSLA9 promoter. This Arabidopsis thaliana (Mouse-ear cress) protein is Basic leucine zipper 1 (BZIP1).